The chain runs to 542 residues: GMP synthase [glutamine-hydrolyzing] (542 aa).

The region spanning 28-218 is the Glutamine amidotransferase type-1 domain; the sequence is IIVILDFGSQ…VYHICHCEPT (191 aa). The Nucleophile role is filled by C105. Active-site residues include H192 and E194. Positions 219-417 constitute a GMPS ATP-PPase domain; that stretch reads WTTAAFIEES…IGLPEEIVRR (199 aa). 246-252 is an ATP binding site; that stretch reads SGGVDSS.

As to quaternary structure, homodimer.

It catalyses the reaction XMP + L-glutamine + ATP + H2O = GMP + L-glutamate + AMP + diphosphate + 2 H(+). It participates in purine metabolism; GMP biosynthesis; GMP from XMP (L-Gln route): step 1/1. Functionally, catalyzes the synthesis of GMP from XMP. The polypeptide is GMP synthase [glutamine-hydrolyzing] (guaA) (Synechocystis sp. (strain ATCC 27184 / PCC 6803 / Kazusa)).